Consider the following 461-residue polypeptide: UDP-N-acetylmuramoylalanine--D-glutamate ligase (461 aa).

G123–T129 contributes to the ATP binding site.

It belongs to the MurCDEF family.

It is found in the cytoplasm. The enzyme catalyses UDP-N-acetyl-alpha-D-muramoyl-L-alanine + D-glutamate + ATP = UDP-N-acetyl-alpha-D-muramoyl-L-alanyl-D-glutamate + ADP + phosphate + H(+). Its pathway is cell wall biogenesis; peptidoglycan biosynthesis. Its function is as follows. Cell wall formation. Catalyzes the addition of glutamate to the nucleotide precursor UDP-N-acetylmuramoyl-L-alanine (UMA). The polypeptide is UDP-N-acetylmuramoylalanine--D-glutamate ligase (Natranaerobius thermophilus (strain ATCC BAA-1301 / DSM 18059 / JW/NM-WN-LF)).